The chain runs to 354 residues: Methylthioribose-1-phosphate isomerase (354 aa).

Substrate contacts are provided by residues 49-51 (RGA), arginine 92, and glutamine 199. The active-site Proton donor is the aspartate 240. Residue 250–251 (NK) participates in substrate binding.

This sequence belongs to the eIF-2B alpha/beta/delta subunits family. MtnA subfamily.

The catalysed reaction is 5-(methylsulfanyl)-alpha-D-ribose 1-phosphate = 5-(methylsulfanyl)-D-ribulose 1-phosphate. It participates in amino-acid biosynthesis; L-methionine biosynthesis via salvage pathway; L-methionine from S-methyl-5-thio-alpha-D-ribose 1-phosphate: step 1/6. In terms of biological role, catalyzes the interconversion of methylthioribose-1-phosphate (MTR-1-P) into methylthioribulose-1-phosphate (MTRu-1-P). This chain is Methylthioribose-1-phosphate isomerase, found in Koribacter versatilis (strain Ellin345).